The chain runs to 92 residues: Signal recognition particle 19 kDa protein (92 aa).

The protein belongs to the SRP19 family. Part of the signal recognition particle protein translocation system, which is composed of SRP and FtsY. Archaeal SRP consists of a 7S RNA molecule of 300 nucleotides and two protein subunits: SRP54 and SRP19.

It localises to the cytoplasm. Its function is as follows. Involved in targeting and insertion of nascent membrane proteins into the cytoplasmic membrane. Binds directly to 7S RNA and mediates binding of the 54 kDa subunit of the SRP. This Halobacterium salinarum (strain ATCC 29341 / DSM 671 / R1) protein is Signal recognition particle 19 kDa protein.